The primary structure comprises 159 residues: 2-C-methyl-D-erythritol 2,4-cyclodiphosphate synthase (159 aa).

The a divalent metal cation site is built by Asp10 and His12. Residues Asp10–His12 and His37–Ser38 each bind 4-CDP-2-C-methyl-D-erythritol 2-phosphate. A divalent metal cation is bound at residue His45. 4-CDP-2-C-methyl-D-erythritol 2-phosphate contacts are provided by residues Asp59 to Gly61, Phe64 to Asp68, Ala103 to Leu109, Thr135 to Glu138, Phe142, and Arg145.

Belongs to the IspF family. In terms of assembly, homotrimer. A divalent metal cation is required as a cofactor.

The enzyme catalyses 4-CDP-2-C-methyl-D-erythritol 2-phosphate = 2-C-methyl-D-erythritol 2,4-cyclic diphosphate + CMP. It functions in the pathway isoprenoid biosynthesis; isopentenyl diphosphate biosynthesis via DXP pathway; isopentenyl diphosphate from 1-deoxy-D-xylulose 5-phosphate: step 4/6. Involved in the biosynthesis of isopentenyl diphosphate (IPP) and dimethylallyl diphosphate (DMAPP), two major building blocks of isoprenoid compounds. Catalyzes the conversion of 4-diphosphocytidyl-2-C-methyl-D-erythritol 2-phosphate (CDP-ME2P) to 2-C-methyl-D-erythritol 2,4-cyclodiphosphate (ME-CPP) with a corresponding release of cytidine 5-monophosphate (CMP). The sequence is that of 2-C-methyl-D-erythritol 2,4-cyclodiphosphate synthase from Francisella philomiragia subsp. philomiragia (strain ATCC 25017 / CCUG 19701 / FSC 153 / O#319-036).